Reading from the N-terminus, the 517-residue chain is Gallate 1-beta-glucosyltransferase 84A24 (517 aa).

The active-site Proton acceptor is His-19. Residue His-19 coordinates an anthocyanidin. UDP-alpha-D-glucose-binding residues include Gln-344, His-359, Trp-362, Asn-363, Ser-364, and Glu-367. An anthocyanidin is bound at residue Gly-382. Residues Asp-383 and Gln-384 each contribute to the UDP-alpha-D-glucose site.

It belongs to the UDP-glycosyltransferase family. As to expression, highly expressed in leaf. Also expressed in peel, stem, root and aril.

It localises to the cytoplasm. It catalyses the reaction 3,4,5-trihydroxybenzoate + UDP-alpha-D-glucose = 1-O-galloyl-beta-D-glucose + UDP. It carries out the reaction 3,4-dihydroxybenzoate + UDP-alpha-D-glucose = 1-O-(3,4-dihydroxy-benzoyl)-beta-D-glucose + UDP. The enzyme catalyses 4-hydroxybenzoate + UDP-alpha-D-glucose = 4-(beta-D-glucosyloxy)benzoate + UDP + H(+). The catalysed reaction is (E)-cinnamate + UDP-alpha-D-glucose = 1-O-(trans-cinnamoyl)-beta-D-glucose + UDP. It catalyses the reaction (E)-sinapate + UDP-alpha-D-glucose = 1-O-(trans-sinapoyl)-beta-D-glucose + UDP. It carries out the reaction (E)-4-coumarate + UDP-alpha-D-glucose = 1-O-(trans-4-coumaroyl)-beta-D-glucose + UDP. The enzyme catalyses (E)-caffeate + UDP-alpha-D-glucose = 1-O-[(E)-caffeoyl]-beta-D-glucose + UDP. The catalysed reaction is (E)-ferulate + UDP-alpha-D-glucose = 1-O-[(E)-feruloyl]-beta-D-glucose + UDP. It catalyses the reaction genistein + UDP-alpha-D-glucose = genistein 7-O-beta-D-glucoside + UDP + H(+). It carries out the reaction apigenin + UDP-alpha-D-glucose = apigenin 7-O-beta-D-glucoside + UDP + H(+). The enzyme catalyses luteolin + UDP-alpha-D-glucose = luteolin 7-O-beta-D-glucoside + UDP + H(+). Its function is as follows. Glucosyltransferase that catalyzes the formation of 1-O-beta-D-glucose esters with hydroxybenzoic acids and cinnamic acid including its derivatives as preferred glucosyl acceptors. Has significant activity with gallic acid (3,4,5-trihydroxybenzoic acid), 3,4-dihydroxybenzoic acid, 4-hydroxybenzoic acid, cinnamic acid, sinapic acid, coumaric acid, caffeic acid and ferulic acid in vitro. Gallic acid is the predicted native substrate of the enzyme, which thus catalyzes the formation of 1-O-galloyl-beta-D-glucose, the first committed step of hydrolyzable tannins (HTs) biosynthesis, with punicalagin isomers being the major HTs of pomegranate. Catalyzes the formation of flavonoid glucosides with genistein, apigenin and luteolin in vitro. Has low activity with benzoic acid, 2-hydroxybenzoic acid, 3-hydroxybenzoic acid, 2,4-dihydroxybenzoic acid, naringenin and quercetin. No activity with catechol, resveratrol, chlorogenic acid, catechin and epicatechin (building blocks of proanthocyanidins) or cyanidin, delphinidin and pelargonidin (the three anthocyanidins). The sequence is that of Gallate 1-beta-glucosyltransferase 84A24 from Punica granatum (Pomegranate).